The following is a 514-amino-acid chain: Cytochrome P450 monooxygenase FUS8 (514 aa).

Residues 28–48 traverse the membrane as a helical segment; it reads LTVTKAVGAFIVLFIIIPKVF. N-linked (GlcNAc...) asparagine glycosylation is found at N225 and N443. C460 lines the heme pocket.

It belongs to the cytochrome P450 family. Heme serves as cofactor.

The protein localises to the membrane. The protein operates within mycotoxin biosynthesis. Its function is as follows. Cytochrome P450 monooxygenase; part of the gene cluster that mediates the biosynthesis of the mycotoxin fusarin C. Within the cluster, FUS1, FUS2, FUS8 and FUS9 are sufficient for fusarin production. The roles of the other FUS members are yet undetermined. The fusarin C synthetase FUS1 is responsible for the condensation of one acetyl-coenzyme A (CoA) unit with six malonyl-CoA units and the amide linkage of the arising heptaketide and homoserine, subsequently releasing the first intermediate, prefusarin, as an alcohol with an open ring structure. The cytochrome P450 monooxygenase FUS8 participates in multiple oxidation processes at carbon C-20 and is able to use the FUS1 product as substrate, resulting in formation of 20-hydroxy-prefusarin. This reaction seems to be essential before the 2-pyrrolidone ring closure can be catalyzed by FUS2, generating 20-hydroxy-fusarin. FUS8 is able to further oxidizes carbon C-20 after ring closure, resulting in the formation of carboxy-fusarin C. As the last step, FUS9 methylates the hydroxyl group at C-21 to generate fusarin C. Fusarin C can then rearrange to epi-fusarin C, the (z)-isomers, and fusarin A and fusarin D. The protein is Cytochrome P450 monooxygenase FUS8 of Gibberella moniliformis (strain M3125 / FGSC 7600) (Maize ear and stalk rot fungus).